The chain runs to 420 residues: Histidine--tRNA ligase (420 aa).

This sequence belongs to the class-II aminoacyl-tRNA synthetase family. Homodimer.

The protein localises to the cytoplasm. It catalyses the reaction tRNA(His) + L-histidine + ATP = L-histidyl-tRNA(His) + AMP + diphosphate + H(+). The protein is Histidine--tRNA ligase of Mycobacterium marinum (strain ATCC BAA-535 / M).